Here is a 154-residue protein sequence, read N- to C-terminus: Anaerobic ribonucleoside-triphosphate reductase-activating protein (154 aa).

Cysteine 26, cysteine 30, and cysteine 33 together coordinate [4Fe-4S] cluster. Residues 32–34 (GCY) and glycine 74 each bind S-adenosyl-L-methionine.

This sequence belongs to the organic radical-activating enzymes family. Forms a tetramer composed of two NrdD and two NrdG subunits. It depends on [4Fe-4S] cluster as a cofactor.

It is found in the cytoplasm. The enzyme catalyses glycyl-[protein] + reduced [flavodoxin] + S-adenosyl-L-methionine = glycin-2-yl radical-[protein] + semiquinone [flavodoxin] + 5'-deoxyadenosine + L-methionine + H(+). Activation of anaerobic ribonucleoside-triphosphate reductase under anaerobic conditions by generation of an organic free radical, using S-adenosylmethionine and reduced flavodoxin as cosubstrates to produce 5'-deoxy-adenosine. This Salmonella typhimurium (strain LT2 / SGSC1412 / ATCC 700720) protein is Anaerobic ribonucleoside-triphosphate reductase-activating protein (nrdG).